Here is a 229-residue protein sequence, read N- to C-terminus: Large ribosomal subunit protein uL1 (229 aa).

Belongs to the universal ribosomal protein uL1 family. In terms of assembly, part of the 50S ribosomal subunit.

Binds directly to 23S rRNA. The L1 stalk is quite mobile in the ribosome, and is involved in E site tRNA release. In terms of biological role, protein L1 is also a translational repressor protein, it controls the translation of the L11 operon by binding to its mRNA. The protein is Large ribosomal subunit protein uL1 of Mycoplasmopsis pulmonis (strain UAB CTIP) (Mycoplasma pulmonis).